A 479-amino-acid chain; its full sequence is tRNA modification GTPase MnmE (479 aa).

The (6S)-5-formyl-5,6,7,8-tetrahydrofolate site is built by arginine 30, glutamate 91, and lysine 130. The 177-residue stretch at 226 to 402 (GFRIVLTGLP…VLKDLVKEFA (177 aa)) folds into the TrmE-type G domain. A K(+)-binding site is contributed by asparagine 236. GTP-binding positions include 236–241 (NVGKSS), 255–261 (TDIPGTT), and 280–283 (DTAG). Serine 240 serves as a coordination point for Mg(2+). Residues threonine 255, isoleucine 257, and threonine 260 each coordinate K(+). A Mg(2+)-binding site is contributed by threonine 261. Lysine 479 is a binding site for (6S)-5-formyl-5,6,7,8-tetrahydrofolate.

Belongs to the TRAFAC class TrmE-Era-EngA-EngB-Septin-like GTPase superfamily. TrmE GTPase family. Homodimer. Heterotetramer of two MnmE and two MnmG subunits. K(+) serves as cofactor.

The protein localises to the cytoplasm. Its function is as follows. Exhibits a very high intrinsic GTPase hydrolysis rate. Involved in the addition of a carboxymethylaminomethyl (cmnm) group at the wobble position (U34) of certain tRNAs, forming tRNA-cmnm(5)s(2)U34. The chain is tRNA modification GTPase MnmE from Bdellovibrio bacteriovorus (strain ATCC 15356 / DSM 50701 / NCIMB 9529 / HD100).